A 23-amino-acid polypeptide reads, in one-letter code: Cytochrome c oxidase subunit 7A1, mitochondrial (23 aa).

This sequence belongs to the cytochrome c oxidase VIIa family. As to quaternary structure, component of the complex IV (CIV, cytochrome c oxidase), a multisubunit enzyme composed of 14 subunits. The complex is composed of a catalytic core of 3 subunits MT-CO1, MT-CO2 and MT-CO3, encoded in the mitochondrial DNA, and 11 supernumerary subunits COX4I1 (or COX4I2), COX5A, COX5B, COX6A2 (or COX6A1), COX6B1 (or COX6B2), COX6C, COX7A1 (or COX7A2), COX7B, COX7C, COX8B and NDUFA4, which are encoded in the nuclear genome. The complex exists as a monomer or a dimer and forms supercomplexes (SCs) in the inner mitochondrial membrane with NADH-ubiquinone oxidoreductase (complex I, CI) and ubiquinol-cytochrome c oxidoreductase (cytochrome b-c1 complex, complex III, CIII), resulting in different assemblies (supercomplex SCI(1)III(2)IV(1) and megacomplex MCI(2)III(2)IV(2)).

The protein localises to the mitochondrion inner membrane. Its pathway is energy metabolism; oxidative phosphorylation. Functionally, component of the mitochondrial respiratory complex IV (CIV, also named cytochrome c oxidase complex), the last enzyme in the mitochondrial electron transport chain which drives oxidative phosphorylation. The CIV complex is the component of the respiratory chain that catalyzes the reduction of oxygen to water. Acts as an assembly factor that specifically drives the homodimerization of CIV complexes, mediating the formation of mitochondrial respiratory supercomplexes (respirasomes) containing two CIV: supercomplxes with two molecules of CIV show improved activity. Despite being highly expressed in brown adipose tissue, not required for thermogenesis. The polypeptide is Cytochrome c oxidase subunit 7A1, mitochondrial (COX7A1) (Canis lupus familiaris (Dog)).